The sequence spans 475 residues: UDP-N-acetylmuramate--L-alanine ligase (475 aa).

Residue 114–120 (GTHGKTT) participates in ATP binding.

This sequence belongs to the MurCDEF family.

It localises to the cytoplasm. It carries out the reaction UDP-N-acetyl-alpha-D-muramate + L-alanine + ATP = UDP-N-acetyl-alpha-D-muramoyl-L-alanine + ADP + phosphate + H(+). Its pathway is cell wall biogenesis; peptidoglycan biosynthesis. In terms of biological role, cell wall formation. This is UDP-N-acetylmuramate--L-alanine ligase from Bartonella bacilliformis (strain ATCC 35685 / KC583 / Herrer 020/F12,63).